A 750-amino-acid chain; its full sequence is Serine/threonine-protein kinase GE16371 (750 aa).

Doublecortin domains follow at residues 159 to 245 and 315 to 398; these read LRIK…VEYN and RIVT…AEDF. The Protein kinase domain occupies 479 to 737; it reads YTLGKIIGDG…SEDILDHYWT (259 aa). ATP contacts are provided by residues 485–493 and Lys-508; that span reads IGDGNFAIV. The Proton acceptor role is filled by Asp-600.

Belongs to the protein kinase superfamily. CAMK Ser/Thr protein kinase family. CaMK subfamily.

The enzyme catalyses L-seryl-[protein] + ATP = O-phospho-L-seryl-[protein] + ADP + H(+). It carries out the reaction L-threonyl-[protein] + ATP = O-phospho-L-threonyl-[protein] + ADP + H(+). The protein is Serine/threonine-protein kinase GE16371 of Drosophila yakuba (Fruit fly).